The chain runs to 134 residues: uncharacterized protein (134 aa).

The helical transmembrane segment at 13–35 (FFIAFSAYLVVILLMTAVSVYYL) threads the bilayer.

The protein resides in the membrane. This is an uncharacterized protein from Archaeoglobus fulgidus (strain ATCC 49558 / DSM 4304 / JCM 9628 / NBRC 100126 / VC-16).